The following is a 366-amino-acid chain: Anthranilate phosphoribosyltransferase (366 aa).

5-phospho-alpha-D-ribose 1-diphosphate is bound by residues Gly-103, 106-107 (GD), Thr-111, 113-116 (NLST), 131-139 (KHGNRASSS), and Gly-143. Gly-103 is a binding site for anthranilate. Ser-115 contacts Mg(2+). Asn-134 is an anthranilate binding site. Arg-189 provides a ligand contact to anthranilate. Mg(2+) contacts are provided by Asp-247 and Glu-248.

Belongs to the anthranilate phosphoribosyltransferase family. Homodimer. Requires Mg(2+) as cofactor.

It catalyses the reaction N-(5-phospho-beta-D-ribosyl)anthranilate + diphosphate = 5-phospho-alpha-D-ribose 1-diphosphate + anthranilate. It participates in amino-acid biosynthesis; L-tryptophan biosynthesis; L-tryptophan from chorismate: step 2/5. Catalyzes the transfer of the phosphoribosyl group of 5-phosphorylribose-1-pyrophosphate (PRPP) to anthranilate to yield N-(5'-phosphoribosyl)-anthranilate (PRA). The polypeptide is Anthranilate phosphoribosyltransferase (Mycobacterium leprae (strain Br4923)).